A 315-amino-acid chain; its full sequence is Glutaminase (315 aa).

Residues Ser-70, Asn-120, Glu-166, Asn-173, Tyr-197, Tyr-249, and Val-267 each coordinate substrate.

This sequence belongs to the glutaminase family. Homotetramer.

It catalyses the reaction L-glutamine + H2O = L-glutamate + NH4(+). This chain is Glutaminase, found in Mesorhizobium japonicum (strain LMG 29417 / CECT 9101 / MAFF 303099) (Mesorhizobium loti (strain MAFF 303099)).